We begin with the raw amino-acid sequence, 341 residues long: MATIKDVAKRANVSTTTVSHVINKTRFVAEETRNAVWAAIKELHYSPSAVARSLKVNHTKSIGLLATSSEAAYFAEIIEAVEKNCFQKGYTLILGNAWNNLEKQRAYLSMMAQKRVDGLLVMCSEYPEPLLAMLEEYRHIPMVVMDWGEAKADFTDAVIDNAFEGGYMAGRYLIERGHREIGVIPGPLERNTGAGRLAGFMKAMEEAMIKVPESWIVQGDFEPESGYRAMQQILSQPHRPTAVFCGGDIMAMGALCAADEMGLRVPQDVSLIGYDNVRNARYFTPALTTIHQPKDSLGETAFNMLLDRIVNKREEPQSIEVHPRLIERRSVADGPFRDYRR.

In terms of domain architecture, HTH lacI-type spans 2–56; it reads ATIKDVAKRANVSTTTVSHVINKTRFVAEETRNAVWAAIKELHYSPSAVARSLKV. Positions 4 to 23 form a DNA-binding region, H-T-H motif; sequence IKDVAKRANVSTTTVSHVIN. A DNA-binding region spans residues 48-56; the sequence is SAVARSLKV. Hypoxanthine-binding residues include Y73, R190, T192, F221, and D275.

In terms of assembly, homodimer.

It functions in the pathway purine metabolism; purine nucleotide biosynthesis [regulation]. Is the main repressor of the genes involved in the de novo synthesis of purine nucleotides, regulating purB, purC, purEK, purF, purHD, purL, purMN and guaBA expression. In addition, it participates in the regulation or coregulation of genes involved in de novo pyrimidine nucleotide biosynthesis, salvage and uptake (pyrC, pyrD, carAB and codBA), and of several genes encoding enzymes necessary for nucleotide and polyamine biosynthesis (prsA, glyA, gcvTHP, speA, glnB). Binds to a 16-bp palindromic sequence located within the promoter region of pur regulon genes. The consensus binding sequence is 5'-ACGCAAACGTTTTCNT-3'. PurR is allosterically activated to bind its cognate DNA by binding the purine corepressors, hypoxanthine or guanine, thereby effecting transcription repression. The chain is HTH-type transcriptional repressor PurR (purR) from Escherichia coli (strain K12).